A 94-amino-acid chain; its full sequence is Co-chaperonin GroES (94 aa).

It belongs to the GroES chaperonin family. Heptamer of 7 subunits arranged in a ring. Interacts with the chaperonin GroEL.

Its subcellular location is the cytoplasm. Functionally, together with the chaperonin GroEL, plays an essential role in assisting protein folding. The GroEL-GroES system forms a nano-cage that allows encapsulation of the non-native substrate proteins and provides a physical environment optimized to promote and accelerate protein folding. GroES binds to the apical surface of the GroEL ring, thereby capping the opening of the GroEL channel. The polypeptide is Co-chaperonin GroES (Clostridium kluyveri (strain NBRC 12016)).